We begin with the raw amino-acid sequence, 672 residues long: Acetoacetyl-CoA synthetase (672 aa).

This sequence belongs to the ATP-dependent AMP-binding enzyme family. Abundant in male subcutaneous white adipose tissue after weaning. In white adipose tissue, it is preferentially detected in mature adipocytes but not in preadipocytes. The expression in primary preadipocytes increases during the adipocyte differentiation. In brain, it is expressed in the midbrain, pons/medulla, cerebral cortex, hippocampus and cerebellum. The expression in the cerebellum is restricted primarily to glial cells, while in the cerebral cortex, it is restricted to neuronal cells.

It is found in the cytoplasm. Its subcellular location is the cytosol. The enzyme catalyses acetoacetate + ATP + CoA = acetoacetyl-CoA + AMP + diphosphate. In terms of biological role, converts acetoacetate to acetoacetyl-CoA in the cytosol. Ketone body-utilizing enzyme, responsible for the synthesis of cholesterol and fatty acids. In Rattus norvegicus (Rat), this protein is Acetoacetyl-CoA synthetase (Aacs).